Reading from the N-terminus, the 96-residue chain is Large ribosomal subunit protein eL14 (96 aa).

Belongs to the eukaryotic ribosomal protein eL14 family.

The protein is Large ribosomal subunit protein eL14 of Sulfurisphaera tokodaii (strain DSM 16993 / JCM 10545 / NBRC 100140 / 7) (Sulfolobus tokodaii).